The chain runs to 316 residues: N-acetyl-gamma-glutamyl-phosphate reductase (316 aa).

The active site involves C136.

The protein belongs to the NAGSA dehydrogenase family. Type 1 subfamily.

It localises to the cytoplasm. The catalysed reaction is N-acetyl-L-glutamate 5-semialdehyde + phosphate + NADP(+) = N-acetyl-L-glutamyl 5-phosphate + NADPH + H(+). Its pathway is amino-acid biosynthesis; L-arginine biosynthesis; N(2)-acetyl-L-ornithine from L-glutamate: step 3/4. Its function is as follows. Catalyzes the NADPH-dependent reduction of N-acetyl-5-glutamyl phosphate to yield N-acetyl-L-glutamate 5-semialdehyde. This Xanthomonas campestris pv. campestris (strain 8004) protein is N-acetyl-gamma-glutamyl-phosphate reductase.